The chain runs to 428 residues: Glutamate-1-semialdehyde 2,1-aminomutase 1 (428 aa).

Lys268 carries the post-translational modification N6-(pyridoxal phosphate)lysine.

This sequence belongs to the class-III pyridoxal-phosphate-dependent aminotransferase family. HemL subfamily. In terms of assembly, homodimer. The cofactor is pyridoxal 5'-phosphate.

It localises to the cytoplasm. The catalysed reaction is (S)-4-amino-5-oxopentanoate = 5-aminolevulinate. The protein operates within porphyrin-containing compound metabolism; protoporphyrin-IX biosynthesis; 5-aminolevulinate from L-glutamyl-tRNA(Glu): step 2/2. This is Glutamate-1-semialdehyde 2,1-aminomutase 1 from Bacillus cereus (strain G9842).